Reading from the N-terminus, the 223-residue chain is Uracil phosphoribosyltransferase (223 aa).

Residues R86, R111, and 145-153 (DPILATGST) each bind 5-phospho-alpha-D-ribose 1-diphosphate. Residues I209 and 214-216 (GDA) contribute to the uracil site. D215 contributes to the 5-phospho-alpha-D-ribose 1-diphosphate binding site.

Belongs to the UPRTase family. Mg(2+) is required as a cofactor.

The catalysed reaction is UMP + diphosphate = 5-phospho-alpha-D-ribose 1-diphosphate + uracil. It participates in pyrimidine metabolism; UMP biosynthesis via salvage pathway; UMP from uracil: step 1/1. Its activity is regulated as follows. Allosterically activated by GTP. Its function is as follows. Catalyzes the conversion of uracil and 5-phospho-alpha-D-ribose 1-diphosphate (PRPP) to UMP and diphosphate. The polypeptide is Uracil phosphoribosyltransferase (Natronomonas pharaonis (strain ATCC 35678 / DSM 2160 / CIP 103997 / JCM 8858 / NBRC 14720 / NCIMB 2260 / Gabara) (Halobacterium pharaonis)).